The chain runs to 314 residues: Acetyl-coenzyme A carboxylase carboxyl transferase subunit beta (314 aa).

The region spanning 25-294 is the CoA carboxyltransferase N-terminal domain; sequence VWTKCDSCSQ…PGTKPIVAEF (270 aa). Cys-29, Cys-32, Cys-48, and Cys-51 together coordinate Zn(2+). A C4-type zinc finger spans residues 29 to 51; it reads CDSCSQVLYRAELERNLEVCPKC.

Belongs to the AccD/PCCB family. In terms of assembly, acetyl-CoA carboxylase is a heterohexamer composed of biotin carboxyl carrier protein (AccB), biotin carboxylase (AccC) and two subunits each of ACCase subunit alpha (AccA) and ACCase subunit beta (AccD). Requires Zn(2+) as cofactor.

The protein localises to the cytoplasm. The catalysed reaction is N(6)-carboxybiotinyl-L-lysyl-[protein] + acetyl-CoA = N(6)-biotinyl-L-lysyl-[protein] + malonyl-CoA. It functions in the pathway lipid metabolism; malonyl-CoA biosynthesis; malonyl-CoA from acetyl-CoA: step 1/1. In terms of biological role, component of the acetyl coenzyme A carboxylase (ACC) complex. Biotin carboxylase (BC) catalyzes the carboxylation of biotin on its carrier protein (BCCP) and then the CO(2) group is transferred by the transcarboxylase to acetyl-CoA to form malonyl-CoA. The chain is Acetyl-coenzyme A carboxylase carboxyl transferase subunit beta from Photorhabdus laumondii subsp. laumondii (strain DSM 15139 / CIP 105565 / TT01) (Photorhabdus luminescens subsp. laumondii).